The sequence spans 410 residues: MTDNYDVIIAGAGPAGGQAARDLAARGYDVCVLETESEDEFPSRSNKSTAGTFPSTMASFNIPDEVVMNFTDDVVLESPNDHYHRHQPGAVLEFADFKNWLVDEAEADGAEYRFDARVSKPIMEGGEIVGVRYNGDEEVYADIVIDATGPSAPLAKALDLCDLRREKQAIGIEYEFEGMDLAPDGYGDLTDAMMLRLDHDIAPGGYSWIFHTGGDTAKVGVCYIQNEGHRHNAKSGYTIDDYLQYWTESDPRFADAERIAGKQHRGSAHIQLPGRMSTDNFMAIGDTVPTVDPLWGEGIDKCMRSGRVAAATADRALTNSERDTSASELAIYDQLWHDRVAPKVKNRLFMTEMLYRASNERYDKLLEDLHRLPDEQLDAANGGSPLAMFRMLKFEDLSILASTAKDWFSN.

FAD is bound by residues Ala-15, Glu-34, Val-118, Asp-286, Gly-298, and Ile-299. A 2,3-bis-O-(geranylgeranyl)-sn-glycerol 1-phospholipid is bound by residues Lys-343 and Ala-379.

Belongs to the geranylgeranyl reductase family. DGGGPL reductase subfamily. FAD is required as a cofactor.

It carries out the reaction a 2,3-bis-O-phytanyl-sn-glycerol 1-phospholipid + 8 A = a 2,3-bis-O-(geranylgeranyl)-sn-glycerol 1-phospholipid + 8 AH2. The enzyme catalyses 2,3-bis-O-(phytanyl)-sn-glycerol 1-phosphate + 8 A = 2,3-bis-O-(geranylgeranyl)-sn-glycerol 1-phosphate + 8 AH2. It catalyses the reaction CDP-2,3-bis-O-(geranylgeranyl)-sn-glycerol + 8 AH2 = CDP-2,3-bis-O-(phytanyl)-sn-glycerol + 8 A. The catalysed reaction is archaetidylserine + 8 AH2 = 2,3-bis-O-phytanyl-sn-glycero-3-phospho-L-serine + 8 A. It functions in the pathway membrane lipid metabolism; glycerophospholipid metabolism. Is involved in the reduction of 2,3-digeranylgeranylglycerophospholipids (unsaturated archaeols) into 2,3-diphytanylglycerophospholipids (saturated archaeols) in the biosynthesis of archaeal membrane lipids. Can fully reduce the unsaturated isoprenoid side chains of membrane phospholipids and glycolipids. Is also able to reduce the omega-position isoprene of dolichol phosphate. The chain is Digeranylgeranylglycerophospholipid reductase from Haloferax volcanii (strain ATCC 29605 / DSM 3757 / JCM 8879 / NBRC 14742 / NCIMB 2012 / VKM B-1768 / DS2) (Halobacterium volcanii).